The chain runs to 448 residues: Antilisterial bacteriocin subtilosin biosynthesis protein AlbA (448 aa).

The Radical SAM core domain occupies 115 to 329; it reads FPMPLHATFE…EQHVIDEFKD (215 aa). Residues Cys129, Cys133, Cys136, Cys408, Cys414, and Cys417 each contribute to the [4Fe-4S] cluster site.

Requires [4Fe-4S] cluster as cofactor.

It localises to the cytoplasm. Catalyzes the formation of 3 thioether bonds during production of the sactipeptide subtilosin from SboA. In vitro the thioether bonds cannot be made in the absence of the SboA propeptide, suggesting this is the first reaction in subtilosin maturation. In vitro, in the absence of a second substrate, cleaves S-adenosyl-L-methionine into Met and 5'-dA. The chain is Antilisterial bacteriocin subtilosin biosynthesis protein AlbA (albA) from Bacillus subtilis (strain 168).